The sequence spans 214 residues: tRNA (guanine-N(7)-)-methyltransferase (214 aa).

Glu43, Glu68, Asp95, and Asp117 together coordinate S-adenosyl-L-methionine. Residue Asp117 is part of the active site. Residues Lys121, Asp153, and 190 to 193 (TEYE) each bind substrate.

This sequence belongs to the class I-like SAM-binding methyltransferase superfamily. TrmB family.

The catalysed reaction is guanosine(46) in tRNA + S-adenosyl-L-methionine = N(7)-methylguanosine(46) in tRNA + S-adenosyl-L-homocysteine. The protein operates within tRNA modification; N(7)-methylguanine-tRNA biosynthesis. In terms of biological role, catalyzes the formation of N(7)-methylguanine at position 46 (m7G46) in tRNA. This chain is tRNA (guanine-N(7)-)-methyltransferase, found in Staphylococcus aureus (strain USA300).